The sequence spans 1104 residues: Lon protease homolog, mitochondrial (1104 aa).

The N-terminal 54 residues, 1–54 (MLRGQTLRWRAALQTPRSLILRPLFAPGGYNVGPRSVLETSRRFRSLPPSLRTF), are a transit peptide targeting the mitochondrion. 2 disordered regions span residues 41–192 (SRRF…KPSV) and 296–317 (SLIPPGDSTKSGNSEDKTTEKR). Composition is skewed to basic and acidic residues over residues 64-104 (KPPP…DSSG) and 125-144 (KAADRDQRSVTEDAKREAEA). Residues 158–169 (SDSSSESKPSGS) are compositionally biased toward low complexity. 2 stretches are compositionally biased toward basic and acidic residues: residues 172 to 187 (GGDDGGKKGKKNDKAL) and 308 to 317 (NSEDKTTEKR). One can recognise a Lon N-terminal domain in the interval 199–451 (VMAIPIAKRP…KGLVVLKKEL (253 aa)). 604 to 611 (GPPGVGKT) is an ATP binding site. Residues 825–839 (AEGKAAQEESEKETG) show a composition bias toward basic and acidic residues. The segment at 825 to 857 (AEGKAAQEESEKETGPIESTSEQEKATTENPRV) is disordered. A Lon proteolytic domain is found at 891–1077 (TFPPGVTMGL…SEVFDILFAD (187 aa)). Catalysis depends on residues S983 and K1026.

It belongs to the peptidase S16 family. In terms of assembly, homohexamer or homoheptamer. Organized in a ring with a central cavity.

Its subcellular location is the mitochondrion matrix. It carries out the reaction Hydrolysis of proteins in presence of ATP.. Functionally, ATP-dependent serine protease that mediates the selective degradation of misfolded, unassembled or oxidatively damaged polypeptides as well as certain short-lived regulatory proteins in the mitochondrial matrix. May also have a chaperone function in the assembly of inner membrane protein complexes. Participates in the regulation of mitochondrial gene expression and in the maintenance of the integrity of the mitochondrial genome. Binds to mitochondrial DNA in a site-specific manner. In Emericella nidulans (strain FGSC A4 / ATCC 38163 / CBS 112.46 / NRRL 194 / M139) (Aspergillus nidulans), this protein is Lon protease homolog, mitochondrial (pim1).